Reading from the N-terminus, the 116-residue chain is MSWRGRSTYRPRPRRYVEPPEMIGPMRPEQFSDEVEPATPEEGEPATQRQDPAAAQEGEDEGASAGQGPKPEADSQEQGHPQTGCECEDGPDGQEMDPPNPEEVKTPEEGEKQSQC.

The tract at residues 1–116 is disordered; it reads MSWRGRSTYR…PEEGEKQSQC (116 aa). Acidic residues-rich tracts occupy residues 31–44 and 86–95; these read FSDE…EEGE and ECEDGPDGQE. A compositionally biased stretch (basic and acidic residues) spans 102 to 116; it reads EEVKTPEEGEKQSQC.

The protein belongs to the GAGE family. Not expressed in normal tissues, except in testis, but expressed by a large proportion of tumors of various histological origins.

This Homo sapiens (Human) protein is G antigen 2D (GAGE2D).